A 229-amino-acid chain; its full sequence is Large ribosomal subunit protein uL1 (229 aa).

Belongs to the universal ribosomal protein uL1 family. In terms of assembly, part of the 50S ribosomal subunit.

Functionally, binds directly to 23S rRNA. The L1 stalk is quite mobile in the ribosome, and is involved in E site tRNA release. Protein L1 is also a translational repressor protein, it controls the translation of the L11 operon by binding to its mRNA. This chain is Large ribosomal subunit protein uL1, found in Pediococcus pentosaceus (strain ATCC 25745 / CCUG 21536 / LMG 10740 / 183-1w).